Consider the following 1576-residue polypeptide: MAAATVVLPVEWIKNWEKSGRGEFLHLCRILSENKNHDSSTYRDFQQALYELSYHVIKGNLKHEQASNVLNDISEFREDMPSILADVFCILDIETNCLEEKSKRDYFTQLVLACLYLVSDTVLKERLDPETLESLGLIKQSQQFNQKSVKIKTKLFYKQQKFNLLREENEGYAKLIAELGQDLSGNITSDLILENIKSLIGCFNLDPNRVLDVILEVFECRPEHDDFFISLLESYMSMCEPQTLCHILGFKFKFYQEPNGETPSSLYRVAAVLLQFNLIDLDDLYVHLLPADNCIMDEHKREIVEAKQIVRKLTMVVLSSEKIDEREKEKEKEEEKVEKPPDNQKLGLLEALLKIGDWQHAQNIMDQMPPYYAASHKLIALAICKLIHITIEPLYRRVGVPKGAKGSPVNALQNKRAPKQAESFEDLRRDVFNMFCYLGPHLSHDPILFAKVVRIGKSFMKEFQSDGSKQEDKEKTEVILSCLLSITDQVLLPSLSLMDCNACMSEELWGMFKTFPYQHRYRLYGQWKNETYNSHPLLVKVKAQTIDRAKYIMKRLTKENVKPSGRQIGKLSHSNPTILFDYILSQIQKYDNLITPVVDSLKYLTSLNYDVLAYCIIEALANPEKERMKHDDTTISSWLQSLASFCGAVFRKYPIDLAGLLQYVANQLKAGKSFDLLILKEVVQKMAGIEITEEMTMEQLEAMTGGEQLKAEGGYFGQIRNTKKSSQRLKDALLDHDLALPLCLLMAQQRNGVIFQEGGEKHLKLVGKLYDQCHDTLVQFGGFLASNLSTEDYIKRVPSIDVLCNEFHTPHDAAFFLSRPMYAHHISSKYDELKKSEKGSKQQHKVHKYITSCEMVMAPVHEAVVSLHVSKVWDDISPQFYATFWSLTMYDLAVPHTSYEREVNKLKVQMKAIDDNQEMPPNKKKKEKERCTALQDKLLEEEKKQMEHVQRVLQRLKLEKDNWLLAKSTKNETITKFLQLCIFPRCIFSAIDAVYCARFVELVHQQKTPNFSTLLCYDRVFSDIIYTVASCTENEASRYGRFLCCMLETVTRWHSDRATYEKECGNYPGFLTILRATGFDGGNKADQLDYENFRHVVHKWHYKLTKASVHCLETGEYTHIRNILIVLTKILPWYPKVLNLGQALERRVHKICQEEKEKRPDLYALAMGYFGQLKSRKSYMIPENEFHHKDPPPRNAAASVQNGPGGGPSSSAIGSASKSDESSTEETDKSRERSQCGVKAVNKASSATLKGNSSNGNSSSNSSKTVKENDKEKGKEKEKEKKEKTPATTPEARILGKDGKEKPKEERPNKDEKARETKERTPKSDKEKEKFKKEEKVKDEKFKTTVPNVESKSTQEKEREKEPSRERDIAKEMKSKENVKGGEKTPVSGSLKSPVPRSDIAEPEREQKRRKIDTHPSPSHSSTVKDSLIELKESSAKLYLNHTPPSLSKSKEREMDKKDLDKSRERSREREKKDEKDRKERKRDHSNNDREVPPDLTKRRKEENGTMGVSKHKSESPCESPYPNEKDKEKNKSKSSGKEKGGDSFKSEKMDKISSGGKKLFSLNLSSTHKSSDKHR.

Coiled-coil stretches lie at residues 293–339 (NCIM…KVEK) and 896–965 (HTSY…NWLL). The Nuclear localization signal signature appears at 923-928 (KKKKEK). Residues 1184 to 1576 (NEFHHKDPPP…STHKSSDKHR (393 aa)) form a disordered region. Positions 1218 to 1234 (KSDESSTEETDKSRERS) are enriched in basic and acidic residues. Serine 1222 bears the Phosphoserine mark. Over residues 1251-1263 (GNSSNGNSSSNSS) the composition is skewed to low complexity. Composition is skewed to basic and acidic residues over residues 1265–1285 (TVKE…KEKT), 1294–1343 (ILGK…EKFK), and 1353–1383 (STQE…KGGE). Threonine 1385 carries the phosphothreonine modification. A phosphoserine mark is found at serine 1390, serine 1393, and serine 1417. Polar residues predominate over residues 1416 to 1425 (PSPSHSSTVK). Residue threonine 1443 is modified to Phosphothreonine. Residues 1449-1504 (KSKEREMDKKDLDKSRERSREREKKDEKDRKERKRDHSNNDREVPPDLTKRRKEEN) show a composition bias toward basic and acidic residues. Phosphoserine occurs at positions 1450, 1486, and 1516. Positions 1464–1491 (RERSREREKKDEKDRKERKRDHSNNDRE) form a coiled coil. Over residues 1524–1552 (NEKDKEKNKSKSSGKEKGGDSFKSEKMDK) the composition is skewed to basic and acidic residues.

It belongs to the THOC2 family. In terms of assembly, component of the THO subcomplex, which is composed of THOC1, THOC2, THOC3, THOC5, THOC6 and THOC7. The THO subcomplex interacts with DDX39B to form the THO-DDX39B complex which multimerizes into a 28-subunit tetrameric assembly. Component of the transcription/export (TREX) complex at least composed of ALYREF/THOC4, DDX39B, SARNP/CIP29, CHTOP and the THO subcomplex; in the complex interacts with THOC1, THOC3, THOC5, THOC7 and DDX39B. TREX seems to have a dynamic structure involving ATP-dependent remodeling. Interacts with POLDIP3 and ZC3H11A.

The protein localises to the nucleus. It is found in the nucleus speckle. The protein resides in the cytoplasm. Functionally, component of the THO subcomplex of the TREX complex which is thought to couple mRNA transcription, processing and nuclear export, and which specifically associates with spliced mRNA and not with unspliced pre-mRNA. Required for efficient export of polyadenylated RNA and spliced mRNA. The THOC1-THOC2-THOC3 core complex alone is sufficient to bind export factor NXF1-NXT1 and promote ATPase activity of DDX39B; in the complex THOC2 is the only component that directly interacts with DDX39B. TREX is recruited to spliced mRNAs by a transcription-independent mechanism, binds to mRNA upstream of the exon-junction complex (EJC) and is recruited in a splicing- and cap-dependent manner to a region near the 5' end of the mRNA where it functions in mRNA export to the cytoplasm via the TAP/NXF1 pathway. Required for NXF1 localization to the nuclear rim. THOC2 (and probably the THO complex) is involved in releasing mRNA from nuclear speckle domains. Plays a role for proper neuronal development. This is THO complex subunit 2 (THOC2) from Rhinolophus ferrumequinum (Greater horseshoe bat).